Here is a 155-residue protein sequence, read N- to C-terminus: Small ribosomal subunit protein uS7cz/uS7cy (155 aa).

This sequence belongs to the universal ribosomal protein uS7 family. As to quaternary structure, part of the 30S ribosomal subunit.

The protein resides in the plastid. The protein localises to the chloroplast. In terms of biological role, one of the primary rRNA binding proteins, it binds directly to 16S rRNA where it nucleates assembly of the head domain of the 30S subunit. This Angiopteris evecta (Mule's foot fern) protein is Small ribosomal subunit protein uS7cz/uS7cy (rps7-A).